Consider the following 648-residue polypeptide: Threonine--tRNA ligase (648 aa).

The 61-residue stretch at 1–61 (MINITFPDGA…TEDGSIEIVT (61 aa)) folds into the TGS domain. Residues 242-540 (DHRKLGKELD…LIENYKGAFP (299 aa)) form a catalytic region. Residues C336, H387, and H517 each contribute to the Zn(2+) site.

Belongs to the class-II aminoacyl-tRNA synthetase family. In terms of assembly, homodimer. It depends on Zn(2+) as a cofactor.

The protein resides in the cytoplasm. The enzyme catalyses tRNA(Thr) + L-threonine + ATP = L-threonyl-tRNA(Thr) + AMP + diphosphate + H(+). Its function is as follows. Catalyzes the attachment of threonine to tRNA(Thr) in a two-step reaction: L-threonine is first activated by ATP to form Thr-AMP and then transferred to the acceptor end of tRNA(Thr). Also edits incorrectly charged L-seryl-tRNA(Thr). The polypeptide is Threonine--tRNA ligase (Streptococcus thermophilus (strain ATCC BAA-250 / LMG 18311)).